A 51-amino-acid polypeptide reads, in one-letter code: uncharacterized protein (51 aa).

The interval 1-51 (MARTNVKLCPPKRSKRPSNSRSKSTSHSNRRSLNSLRRTRTSRRSNNGKFT) is disordered. A compositionally biased stretch (low complexity) spans 19-36 (NSRSKSTSHSNRRSLNSL).

This is an uncharacterized protein from Bdellovibrio bacteriovorus (Bacteriophage phiMH2K).